Here is a 259-residue protein sequence, read N- to C-terminus: Kallikrein 1-related peptidase b22 (259 aa).

An N-terminal signal peptide occupies residues 1–17 (MRFLILFLTLSLGGIDA). Residues 18–24 (APPVQSR) constitute a propeptide, activation peptide. The region spanning 25 to 256 (ILGGFKCEKN…FTSWIKDTMA (232 aa)) is the Peptidase S1 domain. Disulfide bonds link cysteine 31/cysteine 171, cysteine 50/cysteine 66, cysteine 150/cysteine 217, cysteine 182/cysteine 196, and cysteine 207/cysteine 232. The Charge relay system role is filled by histidine 65. An N-linked (GlcNAc...) asparagine glycan is attached at asparagine 102. Catalysis depends on aspartate 118, which acts as the Charge relay system. Serine 211 serves as the catalytic Charge relay system.

Belongs to the peptidase S1 family. Kallikrein subfamily.

It carries out the reaction Preferential cleavage of Arg-|-Xaa bonds in small molecule substrates. Highly selective action to release kallidin (lysyl-bradykinin) from kininogen involves hydrolysis of Met-|-Xaa or Leu-|-Xaa.. Its function is as follows. Glandular kallikreins cleave Met-Lys and Arg-Ser bonds in kininogen to release Lys-bradykinin. The polypeptide is Kallikrein 1-related peptidase b22 (Klk1b22) (Mus musculus (Mouse)).